A 304-amino-acid chain; its full sequence is Phosphatidylserine decarboxylase proenzyme (304 aa).

Active-site charge relay system; for autoendoproteolytic cleavage activity residues include aspartate 90, histidine 147, and serine 253. Serine 253 (schiff-base intermediate with substrate; via pyruvic acid; for decarboxylase activity) is an active-site residue. Serine 253 is subject to Pyruvic acid (Ser); by autocatalysis.

Belongs to the phosphatidylserine decarboxylase family. PSD-B subfamily. Prokaryotic type I sub-subfamily. Heterodimer of a large membrane-associated beta subunit and a small pyruvoyl-containing alpha subunit. Pyruvate serves as cofactor. Is synthesized initially as an inactive proenzyme. Formation of the active enzyme involves a self-maturation process in which the active site pyruvoyl group is generated from an internal serine residue via an autocatalytic post-translational modification. Two non-identical subunits are generated from the proenzyme in this reaction, and the pyruvate is formed at the N-terminus of the alpha chain, which is derived from the carboxyl end of the proenzyme. The autoendoproteolytic cleavage occurs by a canonical serine protease mechanism, in which the side chain hydroxyl group of the serine supplies its oxygen atom to form the C-terminus of the beta chain, while the remainder of the serine residue undergoes an oxidative deamination to produce ammonia and the pyruvoyl prosthetic group on the alpha chain. During this reaction, the Ser that is part of the protease active site of the proenzyme becomes the pyruvoyl prosthetic group, which constitutes an essential element of the active site of the mature decarboxylase.

The protein resides in the cell membrane. The catalysed reaction is a 1,2-diacyl-sn-glycero-3-phospho-L-serine + H(+) = a 1,2-diacyl-sn-glycero-3-phosphoethanolamine + CO2. Its pathway is phospholipid metabolism; phosphatidylethanolamine biosynthesis; phosphatidylethanolamine from CDP-diacylglycerol: step 2/2. Its function is as follows. Catalyzes the formation of phosphatidylethanolamine (PtdEtn) from phosphatidylserine (PtdSer). This chain is Phosphatidylserine decarboxylase proenzyme, found in Dickeya dadantii (strain 3937) (Erwinia chrysanthemi (strain 3937)).